The sequence spans 418 residues: Gamma-glutamyl phosphate reductase (418 aa).

The protein belongs to the gamma-glutamyl phosphate reductase family.

It is found in the cytoplasm. It carries out the reaction L-glutamate 5-semialdehyde + phosphate + NADP(+) = L-glutamyl 5-phosphate + NADPH + H(+). It functions in the pathway amino-acid biosynthesis; L-proline biosynthesis; L-glutamate 5-semialdehyde from L-glutamate: step 2/2. In terms of biological role, catalyzes the NADPH-dependent reduction of L-glutamate 5-phosphate into L-glutamate 5-semialdehyde and phosphate. The product spontaneously undergoes cyclization to form 1-pyrroline-5-carboxylate. The sequence is that of Gamma-glutamyl phosphate reductase from Clostridium acetobutylicum (strain ATCC 824 / DSM 792 / JCM 1419 / IAM 19013 / LMG 5710 / NBRC 13948 / NRRL B-527 / VKM B-1787 / 2291 / W).